Consider the following 512-residue polypeptide: Cytochrome P450 98A1 (512 aa).

The helical transmembrane segment at 3–23 (ASLLLSVALAVVLIPLSLALL) threads the bilayer. C441 contacts heme.

The protein belongs to the cytochrome P450 family. Heme is required as a cofactor.

Its subcellular location is the membrane. In Sorghum bicolor (Sorghum), this protein is Cytochrome P450 98A1 (CYP98A1).